Reading from the N-terminus, the 1105-residue chain is Ran-binding protein 6 (1105 aa).

A2 is subject to N-acetylalanine. HEAT repeat units follow at residues 219 to 257 (FKDFADLLPGILQAVNDSCYQDDDSVLESLVEIADTVPK), 361 to 399 (KVVLPMTKEHIMQMLQSPDWKCRHAGLMALSAIGEGCHQ), 402 to 440 (EPILDETVNSVLLFLQDPHPRVRAAACTTLGQMATDFAP), 444 to 483 (KKFHEIVITALLRTMENQGNQRVQSHAASALVIFIEDCPK), 866 to 905 (LPWFEQLLPLIVNLICSSRPWPDRQWGLCIFDDIIEHCSP), 908 to 946 (FKYVEYFRWPMLLNMRDNNPEVRQAAAYGLGVMAQFGGD), and 949 to 987 (RSLCSEAVPLLVKVIKCANSKTKKNVIATENCISAIGKI).

It belongs to the importin beta family.

The protein localises to the cytoplasm. Its subcellular location is the nucleus. Functionally, may function in nuclear protein import as nuclear transport receptor. The polypeptide is Ran-binding protein 6 (Ranbp6) (Mus musculus (Mouse)).